Reading from the N-terminus, the 312-residue chain is Protein-methionine-sulfoxide reductase catalytic subunit MsrP (312 aa).

Residues 1–47 (MLIRRPPDLLPSEITPEPLARGRRALLKGLGAGAALAGLGLPQISQA) constitute a signal peptide (tat-type signal). Mo-molybdopterin contacts are provided by residues N74, 77 to 78 (YE), C133, T168, N216, R221, and 232 to 234 (SAK).

This sequence belongs to the MsrP family. In terms of assembly, heterodimer of a catalytic subunit (MsrP) and a heme-binding subunit (MsrQ). Mo-molybdopterin is required as a cofactor. Post-translationally, predicted to be exported by the Tat system. The position of the signal peptide cleavage has not been experimentally proven.

It is found in the periplasm. It catalyses the reaction L-methionyl-[protein] + a quinone + H2O = L-methionyl-(R)-S-oxide-[protein] + a quinol. Part of the MsrPQ system that repairs oxidized periplasmic proteins containing methionine sulfoxide residues (Met-O), using respiratory chain electrons. Thus protects these proteins from oxidative-stress damage caused by reactive species of oxygen and chlorine generated by the host defense mechanisms. MsrPQ is essential for the maintenance of envelope integrity under bleach stress, rescuing a wide series of structurally unrelated periplasmic proteins from methionine oxidation. The catalytic subunit MsrP is non-stereospecific, being able to reduce both (R-) and (S-) diastereoisomers of methionine sulfoxide. Involved in protection against reactive chlorine species (RCS) generated by chlorite and hypochlorite. The chain is Protein-methionine-sulfoxide reductase catalytic subunit MsrP from Azospira oryzae (strain ATCC BAA-33 / DSM 13638 / PS) (Dechlorosoma suillum).